Reading from the N-terminus, the 359-residue chain is Histamine H2 receptor (359 aa).

At 1 to 22 (MAPNGTASSFCLDSTACKITIT) the chain is on the extracellular side. Asn4 is a glycosylation site (N-linked (GlcNAc...) asparagine). Residues 23 to 44 (VVLAVLILITVAGNVVVCLAVG) form a helical membrane-spanning segment. The Cytoplasmic portion of the chain corresponds to 45-57 (LNRRLRNLTNCFI). A helical transmembrane segment spans residues 58–81 (VSLAITDLLLGLLVLPFSAIYQLS). The Extracellular portion of the chain corresponds to 82 to 92 (CKWSFGKVFCN). Cys91 and Cys174 are joined by a disulfide. The chain crosses the membrane as a helical span at residues 93-114 (IYTSLDVMLCTASILNLFMISL). Over 115–134 (DRYCAVMDPLRYPVLVTPVR) the chain is Cytoplasmic. Residues 135-159 (VAISLVLIWVISITLSFLSIHLGWN) form a helical membrane-spanning segment. The Extracellular portion of the chain corresponds to 160–180 (SRNETSKGNHTTSKCKVQVNE). The chain crosses the membrane as a helical span at residues 181–204 (VYGLVDGLVTFYLPLLIMCITYYR). Residues 205–234 (IFKVARDQAKRINHISSWKAATIREHKATV) are Cytoplasmic-facing. The helical transmembrane segment at 235–258 (TLAAVMGAFIICWFPYFTAFVYRG) threads the bilayer. At 259 to 267 (LRGDDAINE) the chain is on the extracellular side. A helical membrane pass occupies residues 268–289 (VLEAIVLWLGYANSALNPILYA). The Cytoplasmic portion of the chain corresponds to 290 to 359 (ALNRDFRTGY…VTAPQGATDR (70 aa)). Residue Cys305 is the site of S-palmitoyl cysteine attachment. The tract at residues 316–340 (SLRSNASQLSRTQSREPRQQEEKPL) is disordered. Residues 317–327 (LRSNASQLSRT) show a composition bias toward polar residues. Residues 328–340 (QSREPRQQEEKPL) are compositionally biased toward basic and acidic residues.

Belongs to the G-protein coupled receptor 1 family.

It localises to the cell membrane. In terms of biological role, the H2 subclass of histamine receptors mediates gastric acid secretion. Also appears to regulate gastrointestinal motility and intestinal secretion. Possible role in regulating cell growth and differentiation. The activity of this receptor is mediated by G proteins which activate adenylyl cyclase and, through a separate G protein-dependent mechanism, the phosphoinositide/protein kinase (PKC) signaling pathway. This is Histamine H2 receptor (HRH2) from Gorilla gorilla gorilla (Western lowland gorilla).